We begin with the raw amino-acid sequence, 433 residues long: Schlafen-like protein 2 (433 aa).

The 168-residue stretch at 1 to 168 (MADTSPRESK…LSVNFGSQPF (168 aa)) folds into the B30.2/SPRY domain. Positions 199 to 400 (EHVVVKLPFA…RRMASNKCVY (202 aa)) are SLFN-like fold. Catalysis depends on residues Glu211 and Glu216.

This sequence belongs to the Schlafen family. As to quaternary structure, component of the trimeric PUCH (precursor of 21U RNA 5'-end cleavage holoenzyme) complex; consisting of tofu-1, tofu-2 and either slfl-3 or slfl-4. Within the complex, interacts (via N-terminus) with tofu-1 (via N-terminus); the interaction stabilizes tofu-2 and may form a functional nuclease. Within the complex, interacts (via N-terminus) with slfl-3 (via N-terminus); the presence of tofu-1 is required for this interaction. The cofactor is Mg(2+). Expressed in the germline.

Its subcellular location is the cytoplasm. It is found in the mitochondrion. With respect to regulation, inhibited by ethylenediaminetetraacetic acid (EDTA). Its function is as follows. Component of the trimeric PUCH (precursor of 21U RNA 5'-end cleavage holoenzyme) complex, that acts as an endoribonuclease processing the 5'-end of precursor Piwi-interacting RNAs (piRNAs). The PUCH complex consists of tofu-1, tofu-2 and either slfl-3 or slfl-4, with tofu-2 exhibiting endoribonuclease activity. PUCH-mediated processing strictly requires a 7-methyl-G cap (m7 G-cap) and an uracil at position three (U3). PUCH also exhibits a strict bias for piRNA precursors with an A or G at position 1. Mature piRNA production is enhanced by the interaction of PUCH with the PETISCO complex, which is stabilizing piRNA precursors and allows their processing by PUCH. In Caenorhabditis elegans, this protein is Schlafen-like protein 2.